We begin with the raw amino-acid sequence, 511 residues long: Maturase K (511 aa).

It belongs to the intron maturase 2 family. MatK subfamily.

The protein localises to the plastid. It localises to the chloroplast. Its function is as follows. Usually encoded in the trnK tRNA gene intron. Probably assists in splicing its own and other chloroplast group II introns. The polypeptide is Maturase K (Psathyrostachys juncea (Russian wildrye)).